We begin with the raw amino-acid sequence, 95 residues long: UPF0358 protein GTNG_0942 (95 aa).

This sequence belongs to the UPF0358 family.

In Geobacillus thermodenitrificans (strain NG80-2), this protein is UPF0358 protein GTNG_0942.